We begin with the raw amino-acid sequence, 316 residues long: Biotin synthase (316 aa).

The 225-residue stretch at 39–263 (NAIQCSTLLS…LFPKAYVRLS (225 aa)) folds into the Radical SAM core domain. [4Fe-4S] cluster-binding residues include cysteine 54, cysteine 58, and cysteine 61. [2Fe-2S] cluster contacts are provided by cysteine 98, cysteine 129, cysteine 189, and arginine 261.

The protein belongs to the radical SAM superfamily. Biotin synthase family. As to quaternary structure, homodimer. The cofactor is [4Fe-4S] cluster. [2Fe-2S] cluster serves as cofactor.

It carries out the reaction (4R,5S)-dethiobiotin + (sulfur carrier)-SH + 2 reduced [2Fe-2S]-[ferredoxin] + 2 S-adenosyl-L-methionine = (sulfur carrier)-H + biotin + 2 5'-deoxyadenosine + 2 L-methionine + 2 oxidized [2Fe-2S]-[ferredoxin]. It functions in the pathway cofactor biosynthesis; biotin biosynthesis; biotin from 7,8-diaminononanoate: step 2/2. In terms of biological role, catalyzes the conversion of dethiobiotin (DTB) to biotin by the insertion of a sulfur atom into dethiobiotin via a radical-based mechanism. This chain is Biotin synthase, found in Acidithiobacillus ferrooxidans (strain ATCC 23270 / DSM 14882 / CIP 104768 / NCIMB 8455) (Ferrobacillus ferrooxidans (strain ATCC 23270)).